An 88-amino-acid polypeptide reads, in one-letter code: Cell division topological specificity factor (88 aa).

It belongs to the MinE family.

Its function is as follows. Prevents the cell division inhibition by proteins MinC and MinD at internal division sites while permitting inhibition at polar sites. This ensures cell division at the proper site by restricting the formation of a division septum at the midpoint of the long axis of the cell. The chain is Cell division topological specificity factor from Clostridium novyi (strain NT).